Here is a 1217-residue protein sequence, read N- to C-terminus: WD repeat-containing protein on Y chromosome (1217 aa).

8 WD repeats span residues 155 to 199 (EDMT…LRSA), 323 to 362 (RIPL…EPSA), 366 to 405 (GHNG…LLQT), 456 to 495 (THAA…RKII), 508 to 547 (TIDI…VVRN), 595 to 635 (FHTD…RRYN), 740 to 779 (KVGD…IPEA), and 823 to 862 (GHLK…LGTL). Disordered stretches follow at residues 910–929 (QVKR…VEDT) and 1033–1217 (AGGQ…KDKP). Acidic residues predominate over residues 919-929 (EREDEGEVEDT). Polar residues-rich tracts occupy residues 1041-1054 (RASS…TNSI), 1085-1107 (FGPN…SQLK), and 1137-1179 (PVST…TSAN). Residues 1181–1190 (KPDIMPVKIK) show a composition bias toward low complexity. Over residues 1198–1210 (RNTAPVQITTSIA) the composition is skewed to polar residues.

This is WD repeat-containing protein on Y chromosome from Drosophila mojavensis (Fruit fly).